We begin with the raw amino-acid sequence, 498 residues long: Diacylglycerol O-acyltransferase 1 (498 aa).

A disordered region spans residues 1-66 (MGDRGGAGSS…AHTRDKDRQT (66 aa)). Over 1–92 (MGDRGGAGSS…SLFSSDSGFS (92 aa)) the chain is Cytoplasmic. The interval 1–96 (MGDRGGAGSS…SDSGFSNYRG (96 aa)) is involved in homomerization. S20 is modified (phosphoserine). Basic and acidic residues predominate over residues 58–68 (HTRDKDRQTSV). The helical transmembrane segment at 93 to 127 (NYRGILNWCVVMLILSNARLSLENLIKYGILVDPI) threads the bilayer. Topologically, residues 128–139 (QVVSLFLKDPYS) are lumenal. The interval 128 to 139 (QVVSLFLKDPYS) is extracellular loop 1 (EL1). The chain crosses the membrane as a helical span at residues 140 to 165 (WPAPCLIIASNIFIVATFQIEKRLSV). The segment at 140 to 498 (WPAPCLIIAS…VLNYDAPVGA (359 aa)) is MBOAT fold. The Cytoplasmic segment spans residues 166–170 (GALTE). The chain crosses the membrane as a helical span at residues 171–193 (QMGLLLHVVNLATIICFPAAVAL). Over 194–200 (LVESITP) the chain is Lumenal. A helical membrane pass occupies residues 201–232 (VGSLFALASYSIIFLKLSSYRDVNLWCRQRRV). Residues 233–284 (KAKAVSAGKKVSGAAAQNTVSYPDNLTYRDLYYFIFAPTLCYELNFPRSPRI) are Cytoplasmic-facing. Residues 235–287 (KAVSAGKKVSGAAAQNTVSYPDNLTYRDLYYFIFAPTLCYELNFPRSPRIRKR) form an intracellular loop 1 (IL1) region. The chain crosses the membrane as a helical span at residues 285-319 (RKRFLLRRVLEMLFFTQLQVGLIQQWMVPTIQNSM). The Lumenal segment spans residues 320–326 (KPFKDMD). The chain crosses the membrane as a helical span at residues 327-364 (YSRIIERLLKLAVPNHLIWLIFFYWLFHSCLNAVAELL). Residues 365 to 410 (QFGDREFYRDWWNAESVTYFWQNWNIPVHKWCIRHFYKPMLRLGSN) are Cytoplasmic-facing. Residues 365 to 410 (QFGDREFYRDWWNAESVTYFWQNWNIPVHKWCIRHFYKPMLRLGSN) form an intracellular loop 2 (IL2) region. The FYXDWWN motif signature appears at 371–377 (FYRDWWN). An acyl-CoA is bound by residues 385–393 (WQNWNIPVH), Y401, and R415. Positions 391-405 (PVHKWCIRHFYKPML) are amphipathic helix (AH). Residues 411–431 (KWMARTGVFWASAFFHEYLVS) form a helical membrane-spanning segment. H426 is a catalytic residue. The Lumenal segment spans residues 432–439 (IPLRMFRL). A helical membrane pass occupies residues 440–458 (WAFTAMMAQVPLAWIVNRF). Topologically, residues 459–460 (FQ) are cytoplasmic. A helical membrane pass occupies residues 461 to 492 (GNYGNAAVWVTLIIGQPVAVLMYVHDYYVLNY). Residue Y488 participates in an acyl-CoA binding. Topologically, residues 493–498 (DAPVGA) are lumenal.

This sequence belongs to the membrane-bound acyltransferase family. Sterol o-acyltransferase subfamily. In terms of assembly, homodimer or homotetramer; both forms have similar enzymatic activities.

It is found in the endoplasmic reticulum membrane. The enzyme catalyses an acyl-CoA + a 1,2-diacyl-sn-glycerol = a triacyl-sn-glycerol + CoA. The catalysed reaction is all-trans-retinol + an acyl-CoA = an all-trans-retinyl ester + CoA. It carries out the reaction 2-(9Z-octadecenoyl)-glycerol + (9Z)-octadecenoyl-CoA = 1,2-di-(9Z-octadecenoyl)-sn-glycerol + CoA. It catalyses the reaction 1,2-di-(9Z-octadecenoyl)-sn-glycerol + (9Z)-octadecenoyl-CoA = 1,2,3-tri-(9Z-octadecenoyl)-glycerol + CoA. The enzyme catalyses all-trans-retinol + hexadecanoyl-CoA = all-trans-retinyl hexadecanoate + CoA. The catalysed reaction is 1-O-(9Z-octadecenyl)-glycerol + (9Z)-octadecenoyl-CoA = 1-O-(9Z-octadecyl)-3-(9Z-octadecenoyl)-glycerol + CoA. It carries out the reaction 1-O-(9Z-octadecyl)-3-(9Z-octadecenoyl)-glycerol + (9Z)-octadecenoyl-CoA = 1-O-(9Z-octadecenyl)-2,3-di-(9Z-octadecenoyl)glycerol + CoA. It catalyses the reaction 1-(9Z-octadecenoyl)-glycerol + (9Z)-octadecenoyl-CoA = 1,2-di-(9Z-octadecenoyl)-glycerol + CoA. The enzyme catalyses 1,2-di-(9Z-octadecenoyl)-glycerol + (9Z)-octadecenoate + H(+) = 1,2,3-tri-(9Z-octadecenoyl)-glycerol + H2O. The catalysed reaction is 1-octadecanoyl-2-(5Z,8Z,11Z,14Z-eicosatetraenoyl)-sn-glycerol + (9Z)-octadecenoyl-CoA = 1-octadecanoyl-2-(5Z,8Z,11Z,14Z)-eicosatetraenoyl-3-(9Z)-octadecenoyl-sn-glycerol + CoA. It carries out the reaction hexadecane-1,2-diol + 2 hexadecanoyl-CoA = 1,2-O,O-dihexadecanoyl-1,2-hexadecanediol + 2 CoA. It catalyses the reaction hexadecane-1,2-diol + hexadecanoyl-CoA = 2-hydroxyhexadecyl hexadecanoate + CoA. The enzyme catalyses 2-(9Z-octadecenoyl)-glycerol + hexadecanoyl-CoA = 1-hexadecanoyl-2-(9Z-octadecenoyl)-sn-glycerol + CoA. The catalysed reaction is 1,2-di-(9Z-octadecenoyl)-sn-glycerol + hexadecanoyl-CoA = 1,2-di-(9Z)-octadecenoyl-3-hexadecanoyl-sn-glycerol + CoA. It carries out the reaction hexadecan-1-ol + hexadecanoyl-CoA = hexadecanyl hexadecanoate + CoA. It catalyses the reaction 13-cis-retinol + hexadecanoyl-CoA = 13-cis-retinyl hexadecanoate + CoA. The enzyme catalyses 1,3-di-(9Z-octadecenoyl)-glycerol + (9Z)-octadecenoyl-CoA = 1,2,3-tri-(9Z-octadecenoyl)-glycerol + CoA. The catalysed reaction is 2,3-di-(9Z)-octadecenoyl-sn-glycerol + (9Z)-octadecenoyl-CoA = 1,2,3-tri-(9Z-octadecenoyl)-glycerol + CoA. It participates in lipid metabolism; glycerolipid metabolism. Functionally, catalyzes the terminal and only committed step in triacylglycerol synthesis by using diacylglycerol and fatty acyl CoA as substrates. Highly expressed in epithelial cells of the small intestine and its activity is essential for the absorption of dietary fats. In liver, plays a role in esterifying exogenous fatty acids to glycerol, and is required to synthesize fat for storage. Also present in female mammary glands, where it produces fat in the milk. May be involved in VLDL (very low density lipoprotein) assembly. In contrast to DGAT2 it is not essential for survival. Functions as the major acyl-CoA retinol acyltransferase (ARAT) in the skin, where it acts to maintain retinoid homeostasis and prevent retinoid toxicity leading to skin and hair disorders. Exhibits additional acyltransferase activities, includin acyl CoA:monoacylglycerol acyltransferase (MGAT), wax monoester and wax diester synthases. Also able to use 1-monoalkylglycerol (1-MAkG) as an acyl acceptor for the synthesis of monoalkyl-monoacylglycerol (MAMAG). This is Diacylglycerol O-acyltransferase 1 from Rattus norvegicus (Rat).